Consider the following 191-residue polypeptide: Protein Ves (191 aa).

It belongs to the Ves family.

The sequence is that of Protein Ves from Shigella boydii serotype 18 (strain CDC 3083-94 / BS512).